A 60-amino-acid chain; its full sequence is Antimicrobial peptide Eval151 (60 aa).

A signal peptide spans 1 to 23 (MKVLPVLFLTLLVLISIPAETFC). Arg-36 is subject to Arginine amide. A compositionally biased stretch (basic and acidic residues) spans 36-54 (RGKRNDFFRSDVSRDDESH). Positions 36 to 60 (RGKRNDFFRSDVSRDDESHPSPGQK) are disordered. Residues 37 to 60 (GKRNDFFRSDVSRDDESHPSPGQK) constitute a propeptide that is removed on maturation.

Belongs to the non-disulfide-bridged peptide (NDBP) superfamily. Expressed by the venom gland.

Its subcellular location is the secreted. Its function is as follows. Probable antimicrobial peptide. Has no inhibitory activity against herpes simplex virus type 1 (HSV-1). The sequence is that of Antimicrobial peptide Eval151 from Euscorpiops validus (Scorpion).